The primary structure comprises 115 residues: Ribonuclease P protein component (115 aa).

The protein belongs to the RnpA family. As to quaternary structure, consists of a catalytic RNA component (M1 or rnpB) and a protein subunit.

It carries out the reaction Endonucleolytic cleavage of RNA, removing 5'-extranucleotides from tRNA precursor.. Its function is as follows. RNaseP catalyzes the removal of the 5'-leader sequence from pre-tRNA to produce the mature 5'-terminus. It can also cleave other RNA substrates such as 4.5S RNA. The protein component plays an auxiliary but essential role in vivo by binding to the 5'-leader sequence and broadening the substrate specificity of the ribozyme. In Natranaerobius thermophilus (strain ATCC BAA-1301 / DSM 18059 / JW/NM-WN-LF), this protein is Ribonuclease P protein component.